A 245-amino-acid chain; its full sequence is Serine/arginine-rich splicing factor 1B (245 aa).

The RRM 1 domain occupies 15 to 90 (CRIYVGNLPP…YRLRVEFPRS (76 aa)). 2 disordered regions span residues 89–116 (RSGRGGGRGGGGGGGVGAPRGRYGPPSR) and 192–245 (KVDG…RSRT). Residues 91–106 (GRGGGRGGGGGGGVGA) are compositionally biased toward gly residues. In terms of domain architecture, RRM 2 spans 120-194 (YRVIVSGLPP…ETAYIRVKVD (75 aa)). A compositionally biased stretch (basic residues) spans 204–245 (SRSRSRSRSRSRSNSRSRSYSPRRSRGSPRYSPRHSRSRSRT).

Belongs to the splicing factor SR family.

The protein localises to the cytoplasm. Its subcellular location is the nucleus speckle. Functionally, may play a role in preventing exon skipping, ensuring the accuracy of splicing and regulating alternative splicing. The chain is Serine/arginine-rich splicing factor 1B (srsf1b) from Danio rerio (Zebrafish).